The sequence spans 191 residues: Putative resolvase L103 (191 aa).

Residues 11 to 30 (LEVLKVHYQTLYRMEEKGLI) constitute a DNA-binding region (H-T-H motif). Positions 59 to 191 (KGICYCRVSS…KKSGKLKAKK (133 aa)) constitute a Resolvase/invertase-type recombinase catalytic domain. A coiled-coil region spans residues 65-91 (RVSSKKQIKDLNRQVEYMEKNYPEYEI). Catalysis depends on serine 67, which acts as the O-(5'-phospho-DNA)-serine intermediate.

This sequence belongs to the site-specific recombinase resolvase family.

In terms of biological role, resolvase catalyzes the resolution (a site-specific recombination) of the cointegrated replicon to yield the final transposition products. The polypeptide is Putative resolvase L103 (Acanthamoeba polyphaga (Amoeba)).